A 783-amino-acid polypeptide reads, in one-letter code: MLPVASGTRGSTQDLFQVGLAPPGNAKDILLLYEEDAEEWALYLREIFMRVVEREAILLYPLHSFSSSHLEMLNFYAYKCKLLIISNSLLKDLTPKKCQFLEKILHSTGNVVTLLCGMESSDPFYQLLSIPRKRWEISTEQDPDGYISVIRQILDQGPEDYLEVSIPTDSRAKYPEDTSGQKGTDVLASLRPSVPRVLVLPGEIPCEKPGEIFILLKDELIGEILEVEFISTNKRLRARPARWNKSVWHMKAADFPAGSVTVNIHCDGIIKATTEIKYCSAAKATESPFRVSDPGKSLCQKSIEELDNVLASIFKREIPYYEFKHLQAETYPQKERTHTTELPTLLHCAAKFGLKNLALHLLQCSGATRAARMKATDGSDLLHIAERHGHEELKEVFEDFLSQNTGRNSKQENDYEEDVISFSTYSPSMPSPASLHELRKTHRRNTDRSEEPERSVEMKEEEAGAEARRSLSEGERESSENQYDDLYVFIPGFDTEGNSEEPLPHCRPPLLPPRPGTAASQLERPHFTSQGKVLEDQMERSQNWNDLNARPETREESSREEKKEEAQEEEEEEENPYAFAETEDNEYDLILASKSVKKRTGNRSFIINRPPAPTPRPTHIPPKEETTPYIAQVFQQKAARRQSDGDKFYSLPKKPDKTRMEGPTFPSTRDYLTTGQEELILLQERVKNGKMSVDEALEKFKHWQMGKSGLEMIQQEKLRQLRDNIIGKRPEDENAYDKLTIVHHPSGNTAHNENMLYNSPFNSKFPARIQVEKEFGFCCKKDH.

Residues 1 to 154 form an interaction with ITPR2 region; sequence MLPVASGTRG…GYISVIRQIL (154 aa). Residues 25 to 153 form the TIR domain; it reads NAKDILLLYE…DGYISVIRQI (129 aa). Residues 199 to 326 form the DBB domain; sequence VLPGEIPCEK…EIPYYEFKHL (128 aa). 2 ANK repeats span residues 341–370 and 377–407; these read ELPT…ATRA and DGSD…NTGR. Disordered regions lie at residues 422-521, 538-586, 604-624, and 641-670; these read FSTY…AASQ, MERS…EDNE, SFII…PPKE, and RQSD…STRD. A compositionally biased stretch (basic and acidic residues) spans 444–479; it reads RNTDRSEEPERSVEMKEEEAGAEARRSLSEGERESS. Residues 505-515 show a composition bias toward pro residues; it reads HCRPPLLPPRP. A compositionally biased stretch (basic and acidic residues) spans 549-565; sequence ARPETREESSREEKKEE. Over residues 566-586 the composition is skewed to acidic residues; the sequence is AQEEEEEEENPYAFAETEDNE. Positions 610–620 are enriched in pro residues; it reads PPAPTPRPTHI. The segment covering 641–660 has biased composition (basic and acidic residues); it reads RQSDGDKFYSLPKKPDKTRM. A Phosphotyrosine modification is found at tyrosine 649.

As to quaternary structure, interacts with LYN, ITPR1 and ITPR2. Post-translationally, phosphorylated on tyrosines upon BCR activation. As to expression, specifically expressed in spleen. Highly expressed in immature B-cells and recirculating B-cells, and at low levels in pro-B and pre-B cells.

Involved in B-cell receptor (BCR)-induced Ca(2+) mobilization from intracellular stores. Promotes Lyn-mediated phosphorylation of IP3 receptors 1 and 2. This is B-cell scaffold protein with ankyrin repeats (Bank1) from Mus musculus (Mouse).